We begin with the raw amino-acid sequence, 378 residues long: Palmitoyltransferase PFA4 (378 aa).

At 1–9 the chain is on the cytoplasmic side; sequence MPVKLRWPW. A helical transmembrane segment spans residues 10–30; the sequence is LGIAIPTFLISFIGYGAHYFI. At 31-40 the chain is on the lumenal side; it reads LSNFLSVPKQ. The helical transmembrane segment at 41-61 threads the bilayer; the sequence is ITFEFCLSMIWLSYYLAICTN. The Cytoplasmic portion of the chain corresponds to 62-119; that stretch reads PGRPLPNYKPPPDIWRNFCKKCQSYKPERSHHCKTCNQCVLMMDHHCPWTMNCVGFAN. One can recognise a DHHC domain in the interval 78–128; it reads NFCKKCQSYKPERSHHCKTCNQCVLMMDHHCPWTMNCVGFANYPHFLRFLF. C108 acts as the S-palmitoyl cysteine intermediate in catalysis. A helical transmembrane segment spans residues 120–140; it reads YPHFLRFLFWIIVTTSVLFCI. Topologically, residues 141-164 are lumenal; the sequence is QAKRIYFIWQQRHLPGYFFKKSEL. The chain crosses the membrane as a helical span at residues 165-185; that stretch reads IFLTISSPLNSFVLLTITILF. At 186-378 the chain is on the cytoplasmic side; sequence LRCLFNQILN…DDFGVDVDME (193 aa).

The protein belongs to the DHHC palmitoyltransferase family. PFA4 subfamily. Post-translationally, autopalmitoylated.

It is found in the endoplasmic reticulum membrane. It catalyses the reaction L-cysteinyl-[protein] + hexadecanoyl-CoA = S-hexadecanoyl-L-cysteinyl-[protein] + CoA. Functionally, mediates the reversible addition of palmitate to target proteins, thereby regulating their membrane association and biological function. Palmitoylates several amino acid permeases. Palmitoylates chitin synthase CHS3, which is required for its proper export from the ER. Can palmitoylate RAS2 in vitro. The protein is Palmitoyltransferase PFA4 of Saccharomyces cerevisiae (strain ATCC 204508 / S288c) (Baker's yeast).